A 322-amino-acid chain; its full sequence is Ferredoxin--NADP reductase (322 aa).

7 residues coordinate FAD: Asp-34, Gln-42, Tyr-47, Val-87, Phe-120, Asp-279, and Thr-320.

It belongs to the ferredoxin--NADP reductase type 2 family. Homodimer. Requires FAD as cofactor.

It catalyses the reaction 2 reduced [2Fe-2S]-[ferredoxin] + NADP(+) + H(+) = 2 oxidized [2Fe-2S]-[ferredoxin] + NADPH. This is Ferredoxin--NADP reductase from Streptococcus pneumoniae serotype 2 (strain D39 / NCTC 7466).